The chain runs to 282 residues: Acetyl-coenzyme A carboxylase carboxyl transferase subunit beta (282 aa).

One can recognise a CoA carboxyltransferase N-terminal domain in the interval 26-282 (QWVKCPETGE…IIRLLNLLME (257 aa)).

This sequence belongs to the AccD/PCCB family. Acetyl-CoA carboxylase is a heterohexamer composed of biotin carboxyl carrier protein (AccB), biotin carboxylase (AccC) and two subunits each of ACCase subunit alpha (AccA) and ACCase subunit beta (AccD).

The protein resides in the cytoplasm. It catalyses the reaction N(6)-carboxybiotinyl-L-lysyl-[protein] + acetyl-CoA = N(6)-biotinyl-L-lysyl-[protein] + malonyl-CoA. The protein operates within lipid metabolism; malonyl-CoA biosynthesis; malonyl-CoA from acetyl-CoA: step 1/1. Functionally, component of the acetyl coenzyme A carboxylase (ACC) complex. Biotin carboxylase (BC) catalyzes the carboxylation of biotin on its carrier protein (BCCP) and then the CO(2) group is transferred by the transcarboxylase to acetyl-CoA to form malonyl-CoA. The protein is Acetyl-coenzyme A carboxylase carboxyl transferase subunit beta of Salinibacter ruber (strain DSM 13855 / M31).